The primary structure comprises 398 residues: S-adenosylmethionine synthase (398 aa).

An ATP-binding site is contributed by 136–141; sequence GTGSSD.

The protein belongs to the AdoMet synthase 2 family. Requires Mg(2+) as cofactor.

It carries out the reaction L-methionine + ATP + H2O = S-adenosyl-L-methionine + phosphate + diphosphate. Its pathway is amino-acid biosynthesis; S-adenosyl-L-methionine biosynthesis; S-adenosyl-L-methionine from L-methionine: step 1/1. Functionally, catalyzes the formation of S-adenosylmethionine from methionine and ATP. The sequence is that of S-adenosylmethionine synthase from Methanosarcina barkeri (strain Fusaro / DSM 804).